Here is a 151-residue protein sequence, read N- to C-terminus: Ubiquitin-conjugating enzyme E2 2 (151 aa).

The UBC core domain occupies 4–150 (AARRRLMRDF…VRETVEKSWE (147 aa)). The active-site Glycyl thioester intermediate is the C88.

This sequence belongs to the ubiquitin-conjugating enzyme family.

It is found in the cytoplasm. The protein resides in the nucleus. It carries out the reaction S-ubiquitinyl-[E1 ubiquitin-activating enzyme]-L-cysteine + [E2 ubiquitin-conjugating enzyme]-L-cysteine = [E1 ubiquitin-activating enzyme]-L-cysteine + S-ubiquitinyl-[E2 ubiquitin-conjugating enzyme]-L-cysteine.. The protein operates within protein modification; protein ubiquitination. Its function is as follows. Catalyzes the covalent attachment of ubiquitin to other proteins. Plays a role in transcription regulation by catalyzing the monoubiquitination of histone H2B to form H2BK123ub1. H2BK123ub1 gives a specific tag for epigenetic transcriptional activation and is also a prerequisite for H3K4me and H3K79me formation. Also involved in postreplication repair of UV-damaged DNA, in N-end rule-dependent protein degradation and in sporulation. This Neurospora crassa (strain ATCC 24698 / 74-OR23-1A / CBS 708.71 / DSM 1257 / FGSC 987) protein is Ubiquitin-conjugating enzyme E2 2 (mus-8).